A 2388-amino-acid polypeptide reads, in one-letter code: Highly reducing polyketide synthase Preu1 (2388 aa).

The region spanning 7 to 432 is the Ketosynthase family 3 (KS3) domain; the sequence is NDDIAIVGLA…GTNAHVILDD (426 aa). Catalysis depends on for beta-ketoacyl synthase activity residues C180, H315, and H355. The malonyl-CoA:ACP transacylase (MAT) domain stretch occupies residues 549-875; it reads GFVFTGQGAQ…SSVLMRGEDG (327 aa). S641 functions as the For malonyltransferase activity in the catalytic mechanism. Residues 940 to 1074 form an N-terminal hotdog fold region; that stretch reads HDLLGAPTQD…GLGKIHYRPE (135 aa). Positions 940-1256 constitute a PKS/mFAS DH domain; sequence HDLLGAPTQD…CRELPNGNSQ (317 aa). The segment at 941–1251 is dehydratase (DH) domain; it reads DLLGAPTQDS…VEGLRCRELP (311 aa). H972 (proton acceptor; for dehydratase activity) is an active-site residue. Residues 1102-1256 are C-terminal hotdog fold; that stretch reads TASISPVDFY…CRELPNGNSQ (155 aa). Catalysis depends on D1167, which acts as the Proton donor; for dehydratase activity. The interval 1676 to 1983 is enoyl reductase (ER) domain; it reads KLPSDARFTS…VPTGLGKAVL (308 aa). A ketoreductase (KR) domain region spans residues 2007 to 2191; sequence ATYVLAGGLG…AATSVDLGLM (185 aa). Residues 2303-2380 form the Carrier domain; the sequence is QANGIVLEAL…ALAEKISKAS (78 aa). The residue at position 2340 (S2340) is an O-(pantetheine 4'-phosphoryl)serine.

Pantetheine 4'-phosphate serves as cofactor.

Functionally, highly reducing polyketide synthase; part of a gene cluster that mediates the biosynthesis of a yet unidentified natural product. This chain is Highly reducing polyketide synthase Preu1, found in Preussia isomera (Coprophilous fungus).